The sequence spans 91 residues: ATP synthase subunit c (91 aa).

2 consecutive transmembrane segments (helical) span residues 4–24 and 53–73; these read FTMC…GTGI and IGLA…LIIL.

It belongs to the ATPase C chain family. As to quaternary structure, F-type ATPases have 2 components, F(1) - the catalytic core - and F(0) - the membrane proton channel. F(1) has five subunits: alpha(3), beta(3), gamma(1), delta(1), epsilon(1). F(0) has three main subunits: a(1), b(2) and c(10-14). The alpha and beta chains form an alternating ring which encloses part of the gamma chain. F(1) is attached to F(0) by a central stalk formed by the gamma and epsilon chains, while a peripheral stalk is formed by the delta and b chains.

It localises to the cell inner membrane. F(1)F(0) ATP synthase produces ATP from ADP in the presence of a proton or sodium gradient. F-type ATPases consist of two structural domains, F(1) containing the extramembraneous catalytic core and F(0) containing the membrane proton channel, linked together by a central stalk and a peripheral stalk. During catalysis, ATP synthesis in the catalytic domain of F(1) is coupled via a rotary mechanism of the central stalk subunits to proton translocation. Its function is as follows. Key component of the F(0) channel; it plays a direct role in translocation across the membrane. A homomeric c-ring of between 10-14 subunits forms the central stalk rotor element with the F(1) delta and epsilon subunits. The polypeptide is ATP synthase subunit c (Citrifermentans bemidjiense (strain ATCC BAA-1014 / DSM 16622 / JCM 12645 / Bem) (Geobacter bemidjiensis)).